The sequence spans 417 residues: Serine hydroxymethyltransferase (417 aa).

Residues leucine 116 and 120–122 (GHL) contribute to the (6S)-5,6,7,8-tetrahydrofolate site. Lysine 225 is subject to N6-(pyridoxal phosphate)lysine.

It belongs to the SHMT family. Homodimer. Requires pyridoxal 5'-phosphate as cofactor.

It is found in the cytoplasm. The enzyme catalyses (6R)-5,10-methylene-5,6,7,8-tetrahydrofolate + glycine + H2O = (6S)-5,6,7,8-tetrahydrofolate + L-serine. Its pathway is one-carbon metabolism; tetrahydrofolate interconversion. It participates in amino-acid biosynthesis; glycine biosynthesis; glycine from L-serine: step 1/1. Its function is as follows. Catalyzes the reversible interconversion of serine and glycine with tetrahydrofolate (THF) serving as the one-carbon carrier. This reaction serves as the major source of one-carbon groups required for the biosynthesis of purines, thymidylate, methionine, and other important biomolecules. Also exhibits THF-independent aldolase activity toward beta-hydroxyamino acids, producing glycine and aldehydes, via a retro-aldol mechanism. The polypeptide is Serine hydroxymethyltransferase (Hydrogenobaculum sp. (strain Y04AAS1)).